Reading from the N-terminus, the 89-residue chain is Small ribosomal subunit protein uS17 (89 aa).

This sequence belongs to the universal ribosomal protein uS17 family. In terms of assembly, part of the 30S ribosomal subunit.

Functionally, one of the primary rRNA binding proteins, it binds specifically to the 5'-end of 16S ribosomal RNA. In Acidovorax ebreus (strain TPSY) (Diaphorobacter sp. (strain TPSY)), this protein is Small ribosomal subunit protein uS17.